A 212-amino-acid chain; its full sequence is Thymidylate kinase (212 aa).

11 to 18 (GLEGAGKT) lines the ATP pocket.

Belongs to the thymidylate kinase family.

The catalysed reaction is dTMP + ATP = dTDP + ADP. In terms of biological role, phosphorylation of dTMP to form dTDP in both de novo and salvage pathways of dTTP synthesis. The chain is Thymidylate kinase from Buchnera aphidicola subsp. Schizaphis graminum (strain Sg).